The primary structure comprises 23 residues: uncharacterized protein (23 aa).

The protein localises to the plastid. It localises to the chloroplast. This is an uncharacterized protein from Zea mays (Maize).